The chain runs to 121 residues: Alpha-endosulfine (121 aa).

Positions 1 to 53 (MSQKQEEENPAEETGEEKQDTQEKEGILPEKAEEAKLKAKYPSLGQKPGGSDF) are disordered. Ser-2 is modified (N-acetylserine). Ser-2 bears the Phosphoserine mark. Over residues 16–37 (EEKQDTQEKEGILPEKAEEAKL) the composition is skewed to basic and acidic residues. A Phosphothreonine modification is found at Thr-21. A Phosphoserine modification is found at Ser-43. A Phosphoserine; by GWL modification is found at Ser-67. Positions 79–121 (NKQLPSAGPDKNLVTGDHIPTPQDLPQRKSSLVTSKLAGGQVE) are disordered. Ser-109 bears the Phosphoserine; by PKA mark.

The protein belongs to the endosulfine family. As to quaternary structure, interacts (when phosphorylated at Ser-67) with PPP2R2D. Interacts with ABCC8. Interacts with SNCA; interaction is disrupted when phosphorylated at Ser-109. In terms of processing, phosphorylation at Ser-67 by GWL during mitosis is essential for interaction with PPP2R2D (PR55-delta) and subsequent inactivation of PP2A. Phosphorylated by PKA.

The protein localises to the cytoplasm. Its function is as follows. Protein phosphatase inhibitor that specifically inhibits protein phosphatase 2A (PP2A) during mitosis. When phosphorylated at Ser-67 during mitosis, specifically interacts with PPP2R2D (PR55-delta) and inhibits its activity, leading to inactivation of PP2A, an essential condition to keep cyclin-B1-CDK1 activity high during M phase. Also acts as a stimulator of insulin secretion by interacting with sulfonylurea receptor (ABCC8), thereby preventing sulfonylurea from binding to its receptor and reducing K(ATP) channel currents. This chain is Alpha-endosulfine (ENSA), found in Bos taurus (Bovine).